Reading from the N-terminus, the 382-residue chain is Lipid-A-disaccharide synthase (382 aa).

The protein belongs to the LpxB family.

The enzyme catalyses 2-N,3-O-bis[(3R)-3-hydroxytetradecanoyl]-alpha-D-glucosaminyl 1-phosphate + UDP-2-N,3-O-bis[(3R)-3-hydroxytetradecanoyl]-alpha-D-glucosamine = lipid A disaccharide (E. coli) + UDP + H(+). It catalyses the reaction a lipid X + a UDP-2-N,3-O-bis[(3R)-3-hydroxyacyl]-alpha-D-glucosamine = a lipid A disaccharide + UDP + H(+). It functions in the pathway glycolipid biosynthesis; lipid IV(A) biosynthesis; lipid IV(A) from (3R)-3-hydroxytetradecanoyl-[acyl-carrier-protein] and UDP-N-acetyl-alpha-D-glucosamine: step 5/6. Its function is as follows. Condensation of UDP-2,3-diacylglucosamine and 2,3-diacylglucosamine-1-phosphate to form lipid A disaccharide, a precursor of lipid A, a phosphorylated glycolipid that anchors the lipopolysaccharide to the outer membrane of the cell. This is Lipid-A-disaccharide synthase from Escherichia coli O7:K1 (strain IAI39 / ExPEC).